A 132-amino-acid chain; its full sequence is Small ribosomal subunit protein uS8 (132 aa).

The protein belongs to the universal ribosomal protein uS8 family. Part of the 30S ribosomal subunit. Contacts proteins S5 and S12.

One of the primary rRNA binding proteins, it binds directly to 16S rRNA central domain where it helps coordinate assembly of the platform of the 30S subunit. This is Small ribosomal subunit protein uS8 from Geobacillus sp. (strain WCH70).